Here is a 4516-residue protein sequence, read N- to C-terminus: Dynein axonemal heavy chain 1 (4516 aa).

Residues 1 to 1748 (MVTLSISDTL…YIRAVNAEFI (1748 aa)) form a stem region. Residues 78-160 (SSGSDKSLKN…RKSPLAGTDK (83 aa)) form a disordered region. Basic and acidic residues-rich tracts occupy residues 83–97 (KSLK…KEEA) and 113–129 (ENHD…RNPE). AAA stretches follow at residues 1749–1956 (YGYE…VISA), 2016–2249 (QAIR…TTVK), 2422–2682 (TMMP…VFQG), and 2780–2972 (DYNQ…CCTI). The GPAGTGKT motif signature appears at 1787–1794 (GPAGTGKT). 1787 to 1794 (GPAGTGKT) is a binding site for ATP. Residues 1837–1843 (CFDEFNR) carry the CFDEFNR motif motif. Residues 2054–2061 (GPTGSGKS), 2460–2467 (GPTGTGKT), and 2819–2826 (GVGGSGRS) contribute to the ATP site. Residues 2987-3285 (ATRFLHEIPE…MHKYHFVAKA (299 aa)) form a stalk region. Residues 3293 to 3394 (LREAQDDLEV…QDTVENLENM (102 aa)) are a coiled coil. 2 AAA regions span residues 3388-3618 (VENL…EERP) and 3831-4050 (LPAF…SYNS).

Belongs to the dynein heavy chain family. Consists of at least two heavy chains and a number of intermediate and light chains. Expressed in brain.

It localises to the cytoplasm. The protein localises to the cytoskeleton. It is found in the cilium axoneme. The protein resides in the cell projection. Its subcellular location is the cilium. It localises to the flagellum. Functionally, force generating protein of cilia required for sperm flagellum motility. Produces force towards the minus ends of microtubules. Dynein has ATPase activity; the force-producing power stroke is thought to occur on release of ADP. Required in spermatozoa for the formation of the inner dynein arms and biogenesis of the axoneme. This is Dynein axonemal heavy chain 1 from Rattus norvegicus (Rat).